The sequence spans 732 residues: Glycine--tRNA ligase (732 aa).

Residues 1 to 27 (MRHVLSLVYKCSVFSKQVTVFSNHLRL) constitute a mitochondrion transit peptide. In terms of domain architecture, WHEP-TRS spans 61–117 (ILAPLRANVKEQGDLVRKLKEEKAPEIDIKKAVAELKTRKKILEDKELSLAPAEDLF). Residue Glu297 participates in glycine binding. ATP-binding positions include 329–331 (RNE) and 340–341 (RV). Glu348 is a glycine binding site. 453–454 (EC) contacts ATP. Residue 572 to 574 (EPS) participates in glycine binding. Arg579 contributes to the ATP binding site.

This sequence belongs to the class-II aminoacyl-tRNA synthetase family. As to quaternary structure, homodimer.

The protein resides in the mitochondrion. It is found in the cytoplasm. Its subcellular location is the cell projection. It localises to the axon. It catalyses the reaction tRNA(Gly) + glycine + ATP = glycyl-tRNA(Gly) + AMP + diphosphate. The enzyme catalyses 2 ATP + H(+) = P(1),P(4)-bis(5'-adenosyl) tetraphosphate + diphosphate. In terms of biological role, catalyzes the ATP-dependent ligation of glycine to the 3'-end of its cognate tRNA, via the formation of an aminoacyl-adenylate intermediate (Gly-AMP). Also produces diadenosine tetraphosphate (Ap4A), a universal pleiotropic signaling molecule needed for cell regulation pathways, by direct condensation of 2 ATPs. Thereby, may play a special role in Ap4A homeostasis. Required for terminal arborization of both dendrites and axons during development. The protein is Glycine--tRNA ligase of Bombyx mori (Silk moth).